The chain runs to 1464 residues: Secretory phospholipase A2 receptor (1464 aa).

The N-terminal stretch at methionine 1 to alanine 22 is a signal peptide. Topologically, residues glutamate 23–serine 1398 are extracellular. Positions lysine 40–tyrosine 163 constitute a Ricin B-type lectin domain. 17 cysteine pairs are disulfide-bonded: cysteine 53–cysteine 66, cysteine 91–cysteine 108, cysteine 180–cysteine 206, cysteine 194–cysteine 221, cysteine 262–cysteine 356, cysteine 332–cysteine 348, cysteine 408–cysteine 503, cysteine 480–cysteine 495, cysteine 619–cysteine 636, cysteine 701–cysteine 798, cysteine 776–cysteine 790, cysteine 842–cysteine 939, cysteine 916–cysteine 931, cysteine 1069–cysteine 1089, cysteine 1211–cysteine 1225, cysteine 1282–cysteine 1378, and cysteine 1356–cysteine 1370. Residue asparagine 95 is glycosylated (N-linked (GlcNAc...) asparagine). Residues alanine 175 to aspartate 223 enclose the Fibronectin type-II domain. 8 C-type lectin domains span residues asparagine 240–lysine 357, tyrosine 387–lysine 504, histidine 524–cysteine 645, glycine 675–lysine 799, tyrosine 821–lysine 940, phenylalanine 967–cysteine 1098, tyrosine 1123–cysteine 1234, and phenylalanine 1259–lysine 1379. Asparagine 456 is a glycosylation site (N-linked (GlcNAc...) asparagine). The helical transmembrane segment at isoleucine 1399–phenylalanine 1419 threads the bilayer. Residues cysteine 1420 to glutamine 1464 lie on the Cytoplasmic side of the membrane. The Endocytosis signal motif lies at asparagine 1437–threonine 1443.

As to quaternary structure, interacts with sPLA2-IB/PLA2G1B; this interaction mediates intracellular signaling as well as clearance of extracellular sPLA2-IB/PLA2G1B via endocytotic pathway. Interacts with sPLA2-X/PLA2G10; this interaction mediates sPLA2-X/PLA2G10 clearance and inactivation. The secretory phospholipase A2 receptor form may be produced by the action of metalloproteinases. It contains all extracellular domains and only lacks transmembrane and cytosolic regions. It is however unclear whether this form is produced by proteolytic cleavage as suggested by some experiments, or by alternative splicing.

It is found in the cell membrane. The protein localises to the secreted. In terms of biological role, receptor for secretory phospholipase A2 (sPLA2). Also able to bind to snake PA2-like toxins. Although its precise function remains unclear, binding of sPLA2 to its receptor participates in both positive and negative regulation of sPLA2 functions as well as clearance of sPLA2. Binding of sPLA2-IB/PLA2G1B induces various effects depending on the cell type, such as activation of the mitogen-activated protein kinase (MAPK) cascade to induce cell proliferation, the production of lipid mediators, selective release of arachidonic acid in bone marrow-derived mast cells. In neutrophils, binding of sPLA2-IB/PLA2G1B can activate p38 MAPK to stimulate elastase release and cell adhesion. May be involved in responses in pro-inflammatory cytokine productions during endotoxic shock. Also has endocytic properties and rapidly internalizes sPLA2 ligands, which is particularly important for the clearance of extracellular sPLA2s to protect their potent enzymatic activities. The soluble secretory phospholipase A2 receptor form is circulating and acts as a negative regulator of sPLA2 functions by blocking the biological functions of sPLA2-IB/PLA2G1B and sPLA2-X/PLA2G10. The polypeptide is Secretory phospholipase A2 receptor (PLA2R1) (Pongo abelii (Sumatran orangutan)).